The following is an 84-amino-acid chain: Small ribosomal subunit protein uS17c (84 aa).

Belongs to the universal ribosomal protein uS17 family. As to quaternary structure, part of the 30S ribosomal subunit.

Its subcellular location is the plastid. The protein localises to the chloroplast. In terms of biological role, one of the primary rRNA binding proteins, it binds specifically to the 5'-end of 16S ribosomal RNA. The protein is Small ribosomal subunit protein uS17c (rps17) of Thalassiosira pseudonana (Marine diatom).